Here is a 498-residue protein sequence, read N- to C-terminus: Lipase 3 (498 aa).

A disulfide bridge connects residues Cys-60 and Cys-91. N-linked (GlcNAc...) asparagine glycosylation occurs at Asn-193. Residue Ser-200 is the Acyl-ester intermediate of the active site. N-linked (GlcNAc...) asparagine glycosylation occurs at Asn-384. The active-site Charge relay system is the His-409. The N-linked (GlcNAc...) asparagine glycan is linked to Asn-418.

It belongs to the type-B carboxylesterase/lipase family.

It carries out the reaction a triacylglycerol + H2O = a diacylglycerol + a fatty acid + H(+). In Yarrowia lipolytica (strain CLIB 122 / E 150) (Yeast), this protein is Lipase 3 (LIP3).